Here is a 636-residue protein sequence, read N- to C-terminus: Chaperone protein DnaK (636 aa).

Residue Thr197 is modified to Phosphothreonine; by autocatalysis. Residues 596 to 607 are compositionally biased toward low complexity; sequence LYQQAQEQQQSG. A disordered region spans residues 596–636; that stretch reads LYQQAQEQQQSGSSGGSSDEDVVEDAEIVDEEDEEKRDDNR. Over residues 613 to 636 the composition is skewed to acidic residues; sequence SDEDVVEDAEIVDEEDEEKRDDNR.

The protein belongs to the heat shock protein 70 family.

In terms of biological role, acts as a chaperone. This chain is Chaperone protein DnaK, found in Rubrobacter xylanophilus (strain DSM 9941 / JCM 11954 / NBRC 16129 / PRD-1).